Reading from the N-terminus, the 130-residue chain is Small ribosomal subunit protein uS11 (130 aa).

It belongs to the universal ribosomal protein uS11 family. In terms of assembly, part of the 30S ribosomal subunit. Interacts with proteins S7 and S18. Binds to IF-3.

In terms of biological role, located on the platform of the 30S subunit, it bridges several disparate RNA helices of the 16S rRNA. Forms part of the Shine-Dalgarno cleft in the 70S ribosome. The polypeptide is Small ribosomal subunit protein uS11 (Campylobacter hominis (strain ATCC BAA-381 / DSM 21671 / CCUG 45161 / LMG 19568 / NCTC 13146 / CH001A)).